Here is a 358-residue protein sequence, read N- to C-terminus: Myb family transcription factor APL (358 aa).

The HTH myb-type domain maps to 31-91 (TDPKPRLRWT…HLQKFRLGKQ (61 aa)). The segment at residues 62 to 87 (PKTIMRVMGVKGLTLYHLKSHLQKFR) is a DNA-binding region (H-T-H motif). Residues 125-145 (RNMNEMQMEVQRRLHEQLEVQ) adopt a coiled-coil conformation. An LHEQLE motif is present at residues 138–143 (LHEQLE). A disordered region spans residues 313-358 (RKSGLSGDEGNNGGKLLERPSPRRSPLSPMMNPNGGLIQGRNSPFG).

It belongs to the MYB-CC family. In terms of tissue distribution, expressed in shoots and roots, specifically in the developing protophloem sieve elements. Detected in phloem and/or cambium. Expressed in the phloem tissues of various organs, including leaves and cotyledons, during vegetative growth.

It is found in the nucleus. Transcription factor required for phloem identity. Has a dual role both in promoting phloem differentiation and in repressing xylem differentiation during vascular development. Regulates the expression of the transcription factor NAC045 (AC A4VCM0). May activate the transcription of specific genes involved in phosphate uptake or assimilation. Promotes flowering through transcriptional activation of both FT and its transport machinery component, FTIP1. The protein is Myb family transcription factor APL of Arabidopsis thaliana (Mouse-ear cress).